Consider the following 232-residue polypeptide: Megakaryocyte and platelet inhibitory receptor G6b (232 aa).

Residues 1 to 17 (MALVLQLLPLLLSKVQG) form the signal peptide. Residues 18–140 (NPEVSLEGNP…GSTHGSEYSK (123 aa)) are Extracellular-facing. Residues Asn32 and Asn112 are each glycosylated (N-linked (GlcNAc...) asparagine). Residues 141-161 (VLIPLLGFGLVLGLGALGLVW) traverse the membrane as a helical segment. Over 162 to 232 (WRRSCVPPSH…DASTVYAVVV (71 aa)) the chain is Cytoplasmic. 2 consecutive short sequence motifs (ITIM motif) follow at residues 200–205 (LHYADL) and 226–231 (TVYAVV). At Tyr202 the chain carries Phosphotyrosine.

Interacts (via ITIM motif) with PTPN6 and PTPN11. Binds to heparin. N-glycosylated. Post-translationally, may be O-glycosylated. In terms of processing, phosphorylated.

It is found in the cell membrane. In terms of biological role, inhibitory receptor that acts as a critical regulator of hematopoietic lineage differentiation, megakaryocyte function and platelet production. Inhibits platelet aggregation and activation by agonists such as ADP and collagen-related peptide. This regulation of megakaryocate function as well as platelet production ann activation is done through the inhibition (via the 2 ITIM motifs) of the receptors CLEC1B and GP6:FcRgamma signaling. Appears to operate in a calcium-independent manner. The chain is Megakaryocyte and platelet inhibitory receptor G6b from Rattus norvegicus (Rat).